A 119-amino-acid polypeptide reads, in one-letter code: Large ribosomal subunit protein bL20 (119 aa).

It belongs to the bacterial ribosomal protein bL20 family.

In terms of biological role, binds directly to 23S ribosomal RNA and is necessary for the in vitro assembly process of the 50S ribosomal subunit. It is not involved in the protein synthesizing functions of that subunit. The protein is Large ribosomal subunit protein bL20 of Nitrobacter hamburgensis (strain DSM 10229 / NCIMB 13809 / X14).